Consider the following 1031-residue polypeptide: Telomerase reverse transcriptase (1031 aa).

Positions 498–852 constitute a Reverse transcriptase domain; sequence KEVEEWKKSL…DYCDWIGISI (355 aa). Aspartate 603, aspartate 781, and aspartate 782 together coordinate Mg(2+).

It belongs to the reverse transcriptase family. Telomerase subfamily. Component of the telomerase holoenzyme complex composed minimally of the catalytic subunit p123 and the telomerase RNA template component.

The protein resides in the nucleus. It is found in the chromosome. It localises to the telomere. It carries out the reaction DNA(n) + a 2'-deoxyribonucleoside 5'-triphosphate = DNA(n+1) + diphosphate. In terms of biological role, telomerase is a ribonucleoprotein enzyme essential for the replication of chromosome termini in most eukaryotes. It elongates telomeres. It is a reverse transcriptase that adds simple sequence repeats to chromosome ends by copying a template sequence within the RNA component of the enzyme. This is Telomerase reverse transcriptase from Euplotes aediculatus (Ciliate).